The following is a 334-amino-acid chain: Glyceraldehyde-3-phosphate dehydrogenase B (334 aa).

Residues 12-13 (RI), Asp34, and Ser121 each bind NAD(+). D-glyceraldehyde 3-phosphate contacts are provided by residues 149–151 (SCT), Thr180, 209–210 (TG), and Arg232. Catalysis depends on Cys150, which acts as the Nucleophile. Residue Asn314 coordinates NAD(+).

This sequence belongs to the glyceraldehyde-3-phosphate dehydrogenase family. In terms of assembly, homotetramer.

It catalyses the reaction D-glyceraldehyde 3-phosphate + phosphate + NAD(+) = (2R)-3-phospho-glyceroyl phosphate + NADH + H(+). It participates in carbohydrate degradation; glycolysis; pyruvate from D-glyceraldehyde 3-phosphate: step 1/5. Its function is as follows. Glyceraldehyde-3-phosphate dehydrogenase; part of the gene cluster that mediates the biosynthesis of heptelidic acid (HA), a sesquiterpene lactone that acts as an inhibitor of glyceraldehyde-3-phosphatedehydrogenase (GAPDH) and a growth inhibitor of the salt-tolerant lactic acid bacteria in soy sauce brewing. The GAPDPH hepG/gdpB shows much higher resistance to HA than the GAPDH gpdA located outside of the cluster, but it does not seem to act in self-resistance. This chain is Glyceraldehyde-3-phosphate dehydrogenase B, found in Aspergillus oryzae (strain ATCC 42149 / RIB 40) (Yellow koji mold).